A 461-amino-acid polypeptide reads, in one-letter code: Ufm1-specific protease 2 (461 aa).

Catalysis depends on residues C294, D418, and H420.

Belongs to the peptidase C78 family.

It is found in the endoplasmic reticulum. The protein localises to the cytoplasm. It localises to the nucleus. Its function is as follows. Thiol-dependent isopeptidase that specifically cleaves UFM1, a ubiquitin-like modifier protein, from conjugated proteins, such as CD274/PD-L1, CYB5R3, DDRGK1, MRE11, RPL26/uL24, TRIP4 and RPL26/uL24. While it is also able to mediate the processing of UFM1 precursors, a prerequisite for conjugation reactions, UFSP2 mainly acts as a protein deUFMylase that mediates deconjugation of UFM1 from target proteins. Mediates deUFMylation of RPL26/uL24, a critical step to release the UFM1 ribosome E3 ligase (UREL) complex during the recycling of 60S ribosome subunits from the endoplasmic reticulum. Catalyzes deUFMylation of TRIP4, regulating intracellular nuclear receptors transactivation and thereby regulate cell proliferation and differentiation. The protein is Ufm1-specific protease 2 of Rattus norvegicus (Rat).